Consider the following 123-residue polypeptide: Large ribosomal subunit protein bL12 (123 aa).

Belongs to the bacterial ribosomal protein bL12 family. As to quaternary structure, homodimer. Part of the ribosomal stalk of the 50S ribosomal subunit. Forms a multimeric L10(L12)X complex, where L10 forms an elongated spine to which 2 to 4 L12 dimers bind in a sequential fashion. Binds GTP-bound translation factors.

Forms part of the ribosomal stalk which helps the ribosome interact with GTP-bound translation factors. Is thus essential for accurate translation. The chain is Large ribosomal subunit protein bL12 from Chlorobium luteolum (strain DSM 273 / BCRC 81028 / 2530) (Pelodictyon luteolum).